Reading from the N-terminus, the 709-residue chain is SH3 domain-containing kinase-binding protein 1 (709 aa).

2 consecutive SH3 domains span residues 1–58 and 98–157; these read MVEA…EIKK and RRRR…ELSG. Residues serine 156, serine 159, serine 227, and serine 274 each carry the phosphoserine modification. The segment covering 221–239 has biased composition (low complexity); sequence ETTGSESDGGDSSSTKSEG. The segment at 221–242 is disordered; sequence ETTGSESDGGDSSSTKSEGANG. 3 disordered regions span residues 289-309, 372-485, and 511-650; these read GKKL…MDSR, SDFD…KIDL, and DSVI…VSSQ. Threonine 298 is modified (phosphothreonine). Positions 311–372 constitute an SH3 3 domain; the sequence is KTKDYCKVIF…PDNFVKLLPS (62 aa). The span at 399 to 434 shows a compositional bias: basic and acidic residues; it reads TERKHEIKKIPPERPETLPNRTEEKERPEREPKLDL. Serine 480 carries the post-translational modification Phosphoserine. The segment covering 513 to 528 has biased composition (polar residues); that stretch reads VISSTEKLSHPTTSRP. Residues 535–554 show a composition bias toward low complexity; the sequence is PPSQSLTSSSLSSPDIFDSP. Residues serine 553, serine 555, and serine 565 each carry the phosphoserine modification. Residues 561–575 are compositionally biased toward basic and acidic residues; it reads EEHISLAHRGIDVSK. Residues 579-592 show a composition bias toward polar residues; the sequence is KTVTISQVSDNKTS. Residues 600 to 623 are compositionally biased toward low complexity; that stretch reads MAAASSGPASLSSVASSPMSSSLG. Residues 627-636 are compositionally biased toward polar residues; sequence QRASSPSLFS. A Phosphoserine modification is found at serine 631. Residues 646–708 adopt a coiled-coil conformation; the sequence is AVSSQAAIEE…VNDIKKALQS (63 aa).

As to quaternary structure, can self-associate and form homotetramers. Interacts with CD2, F-actin capping protein, PIK3R3, GRB2, EGFR, MET, BLNK, MAP3K4, PDCD6IP, SPRY2, ARHGAP17, ARHGAP27, CRK, BCAR1, SOS1, ASAP1, ARAP3, HIP1R, SYNJ2, INPP5D and STAP1. Interacts with E3 ubiquitin-protein ligase CBL. Interacts with CBLB, but does not interact with CBLC. Two molecules of SH3KBP1 seem to bind through their respective SH3 1 domain to one molecule of CBLB. The interaction with CBL or CBLB and EGFR is increased upon EGF stimulation. The interaction with CBL is attenuated by PDCD6IP. Interacts (via SH3 domains) with ARAP1. The interaction is independent of EGF and does not affect ARAP1 GTPase-activating activity but is involved in regulating ubiquitination and endocytic trafficking of EGFR. ARAP1 competes with CBL for binding to SH3KBP1 and prevents interaction of CBL with SH3KBP1; this is likely to regulate SH3KBP1-mediated internalization of EGFR. Interacts through its proline-rich region with the SH3 domain of endophilins SH3GL1, SH3GL2 and SH3GL3. The SH3KBP1-endophilin complex seems to associate with a complex containing the phosphorylated receptor (EGFR or MET) and phosphorylated CBL. Probably associates with ASAP1 and phosphorylated EGFR. Probably part of a complex consisting of at least SH3KBP1, ASAP1 and ARAP3. Interacts with focal adhesion kinases PTK2/FAK1 and PTK2B/PYK2, probably as a dimer. Interacts with DAB2 and probably associates with chathrin through its interaction with DAB2. Part of a complex consisting of SH3KBP1, DAB2, and clathrin heavy chain. DAB2 and clathrin dissociate from SH3KBP1 following growth factor treatment, enabling interaction with CBL. Interacts with DDN and probably associates with MAGI2 through its interaction with DDN. Interacts with the SH3 domains of SRC tyrosine-protein kinases SRC, LCK, LYN, FGR, FYN and HCK. Interacts with TRADD, BIRC2, TRAF1, TRAF2 and TNFR1, and the association with a TNFR1-associated complex upon stimulation with TNF-alpha seems to be mediated by SRC. Probably part of a complex consisting of at least SH3KBP1, ASAP1 and ARAP3. Interacts (via SH3 domains) with SHKBP1 (via PXXXPR motifs). Interacts with ATX2. Interaction with CBL is abolished in the presence of SHKBP1. Interacts (via SH3 domains) with ZFP36 (via extreme C-terminal region). Interacts with MAP3K4; this interaction enhances the association with ZFP36. In terms of processing, monoubiquitinated by CBL and CBLB after EGF stimulation; probably on its C-terminus.

It is found in the cytoplasm. It localises to the cytoskeleton. The protein resides in the cytoplasmic vesicle membrane. The protein localises to the synapse. Its subcellular location is the synaptosome. It is found in the cell junction. It localises to the focal adhesion. Functionally, adapter protein involved in regulating diverse signal transduction pathways. Involved in the regulation of endocytosis and lysosomal degradation of ligand-induced receptor tyrosine kinases, including EGFR and MET/hepatocyte growth factor receptor, through an association with CBL and endophilins. The association with CBL, and thus the receptor internalization, may be inhibited by an interaction with PDCD6IP and/or SPRY2. Involved in regulation of ligand-dependent endocytosis of the IgE receptor. Attenuates phosphatidylinositol 3-kinase activity by interaction with its regulatory subunit. May be involved in regulation of cell adhesion; promotes the interaction between TTK2B and PDCD6IP. May be involved in the regulation of cellular stress response via the MAPK pathways through its interaction with MAP3K4. Is involved in modulation of tumor necrosis factor mediated apoptosis. Plays a role in the regulation of cell morphology and cytoskeletal organization. Required in the control of cell shape and migration. Has an essential role in the stimulation of B cell activation. This Mus musculus (Mouse) protein is SH3 domain-containing kinase-binding protein 1 (Sh3kbp1).